Here is a 344-residue protein sequence, read N- to C-terminus: Glycerol-3-phosphate dehydrogenase [NAD(P)+] (344 aa).

Residues Ser18, Tyr19, His39, and Lys113 each contribute to the NADPH site. Lys113, Gly142, and Thr144 together coordinate sn-glycerol 3-phosphate. Position 146 (Ala146) interacts with NADPH. Residues Lys198, Asp251, Ser261, Arg262, and Asn263 each contribute to the sn-glycerol 3-phosphate site. Catalysis depends on Lys198, which acts as the Proton acceptor. An NADPH-binding site is contributed by Arg262. Positions 286 and 288 each coordinate NADPH.

This sequence belongs to the NAD-dependent glycerol-3-phosphate dehydrogenase family.

The protein localises to the cytoplasm. It carries out the reaction sn-glycerol 3-phosphate + NAD(+) = dihydroxyacetone phosphate + NADH + H(+). The enzyme catalyses sn-glycerol 3-phosphate + NADP(+) = dihydroxyacetone phosphate + NADPH + H(+). It functions in the pathway membrane lipid metabolism; glycerophospholipid metabolism. In terms of biological role, catalyzes the reduction of the glycolytic intermediate dihydroxyacetone phosphate (DHAP) to sn-glycerol 3-phosphate (G3P), the key precursor for phospholipid synthesis. The chain is Glycerol-3-phosphate dehydrogenase [NAD(P)+] from Blochmanniella pennsylvanica (strain BPEN).